A 450-amino-acid chain; its full sequence is tRNA modification GTPase MnmE (450 aa).

The (6S)-5-formyl-5,6,7,8-tetrahydrofolate site is built by R23, E80, and R123. A TrmE-type G domain is found at 219–372 (GLHVVLAGKP…LRQRLLQLAG (154 aa)). A K(+)-binding site is contributed by N229. GTP contacts are provided by residues 229-234 (NVGKSS), 248-254 (TPIAGTT), 273-276 (DTAG), and 353-355 (SAR). S233 provides a ligand contact to Mg(2+). K(+) is bound by residues T248, I250, and T253. Residue T254 coordinates Mg(2+). (6S)-5-formyl-5,6,7,8-tetrahydrofolate is bound at residue K450.

Belongs to the TRAFAC class TrmE-Era-EngA-EngB-Septin-like GTPase superfamily. TrmE GTPase family. In terms of assembly, homodimer. Heterotetramer of two MnmE and two MnmG subunits. K(+) serves as cofactor.

The protein resides in the cytoplasm. Exhibits a very high intrinsic GTPase hydrolysis rate. Involved in the addition of a carboxymethylaminomethyl (cmnm) group at the wobble position (U34) of certain tRNAs, forming tRNA-cmnm(5)s(2)U34. This Bordetella parapertussis (strain 12822 / ATCC BAA-587 / NCTC 13253) protein is tRNA modification GTPase MnmE.